A 302-amino-acid chain; its full sequence is Mitochondrial glycine transporter (302 aa).

3 Solcar repeats span residues 22 to 112 (HPVF…LKHH), 119 to 203 (PKPL…AKKL), and 213 to 297 (FSPV…MMEK). Transmembrane regions (helical) follow at residues 28-53 (FVCGSLSGTCSTLLFQPLDLVKTRIQ), 87-113 (GVSPSFLRCIPGVGLYFSTLYTLKHHF), 125-150 (VMLGAGSRTVAAVCMLPFTVVKTRYE), 178-201 (GLTATLMRDAPFSGIYLMFYTRAK), 217-243 (LNFSCGIVAGILASVATQPADVIKTHM), and 272-290 (GGVPRALRRTLMAAMAWTV).

Belongs to the mitochondrial carrier (TC 2.A.29) family. SLC25A38 subfamily.

The protein localises to the mitochondrion inner membrane. The catalysed reaction is glycine(in) = glycine(out). In terms of biological role, mitochondrial glycine transporter that imports glycine into the mitochondrial matrix. Plays an important role in providing glycine for the first enzymatic step in heme biosynthesis, the condensation of glycine with succinyl-CoA to produce 5-aminolevulinate (ALA) in the mitochondrial matrix. Required during erythropoiesis. May play a role as pro-apoptotic protein that induces caspase-dependent apoptosis. The sequence is that of Mitochondrial glycine transporter from Xenopus laevis (African clawed frog).